The sequence spans 355 residues: S-adenosylmethionine:tRNA ribosyltransferase-isomerase (355 aa).

This sequence belongs to the QueA family. Monomer.

Its subcellular location is the cytoplasm. The catalysed reaction is 7-aminomethyl-7-carbaguanosine(34) in tRNA + S-adenosyl-L-methionine = epoxyqueuosine(34) in tRNA + adenine + L-methionine + 2 H(+). The protein operates within tRNA modification; tRNA-queuosine biosynthesis. Transfers and isomerizes the ribose moiety from AdoMet to the 7-aminomethyl group of 7-deazaguanine (preQ1-tRNA) to give epoxyqueuosine (oQ-tRNA). The chain is S-adenosylmethionine:tRNA ribosyltransferase-isomerase from Burkholderia orbicola (strain AU 1054).